We begin with the raw amino-acid sequence, 308 residues long: MSMTELSGVRTFLLGLQERVTAAVAEVDGGDFITDAWQKEPGEPLQGNGITKILENGEVFERAGCGFSHVQGSRLPPSATQHRPELAGAPFEAMGVSLVFHPRNPYVPTVHMNVRMLAATPVSAGPAEAVCWFGGGMDLTPYYGFDEDAVHFHQTCKDALAPFGGDKYPRFKQWCDEYFYLKHRQEQRGIGGIFFDDFQELGLEQSFAMMQSVADSFLPAYLPIVRRRQSQPYGARERDFQLYRRGRYVEFNLVWDRGTHFGLQSGGRTESILMSMPPLASWSYQHRAEAGSPEERLYKEFLIRRDWV.

Position 97 (Ser97) interacts with substrate. Residues His101 and His111 each contribute to the a divalent metal cation site. His111 acts as the Proton donor in catalysis. A substrate-binding site is contributed by 113 to 115 (NVR). The a divalent metal cation site is built by His153 and His183. The tract at residues 248-283 (YVEFNLVWDRGTHFGLQSGGRTESILMSMPPLASWS) is important for dimerization. 266-268 (GGR) lines the substrate pocket.

It belongs to the aerobic coproporphyrinogen-III oxidase family. As to quaternary structure, homodimer. It depends on a divalent metal cation as a cofactor.

It is found in the cytoplasm. The catalysed reaction is coproporphyrinogen III + O2 + 2 H(+) = protoporphyrinogen IX + 2 CO2 + 2 H2O. It participates in porphyrin-containing compound metabolism; protoporphyrin-IX biosynthesis; protoporphyrinogen-IX from coproporphyrinogen-III (O2 route): step 1/1. Functionally, involved in the heme biosynthesis. Catalyzes the aerobic oxidative decarboxylation of propionate groups of rings A and B of coproporphyrinogen-III to yield the vinyl groups in protoporphyrinogen-IX. This Polaromonas sp. (strain JS666 / ATCC BAA-500) protein is Oxygen-dependent coproporphyrinogen-III oxidase.